A 217-amino-acid polypeptide reads, in one-letter code: Segregation and condensation protein B (217 aa).

It belongs to the ScpB family. In terms of assembly, homodimer. Homodimerization may be required to stabilize the binding of ScpA to the Smc head domains. Component of a cohesin-like complex composed of ScpA, ScpB and the Smc homodimer, in which ScpA and ScpB bind to the head domain of Smc. The presence of the three proteins is required for the association of the complex with DNA.

Its subcellular location is the cytoplasm. Participates in chromosomal partition during cell division. May act via the formation of a condensin-like complex containing Smc and ScpA that pull DNA away from mid-cell into both cell halves. The chain is Segregation and condensation protein B from Geobacillus kaustophilus (strain HTA426).